A 447-amino-acid polypeptide reads, in one-letter code: N-succinylarginine dihydrolase (447 aa).

Substrate contacts are provided by residues 21 to 30 (AGLAHGNVAS), N112, and 139 to 140 (HR). E176 is an active-site residue. Residue R215 coordinates substrate. The active site involves H251. Substrate contacts are provided by D253 and N364. C370 (nucleophile) is an active-site residue.

This sequence belongs to the succinylarginine dihydrolase family. In terms of assembly, homodimer.

It catalyses the reaction N(2)-succinyl-L-arginine + 2 H2O + 2 H(+) = N(2)-succinyl-L-ornithine + 2 NH4(+) + CO2. Its pathway is amino-acid degradation; L-arginine degradation via AST pathway; L-glutamate and succinate from L-arginine: step 2/5. Functionally, catalyzes the hydrolysis of N(2)-succinylarginine into N(2)-succinylornithine, ammonia and CO(2). This is N-succinylarginine dihydrolase from Chromohalobacter salexigens (strain ATCC BAA-138 / DSM 3043 / CIP 106854 / NCIMB 13768 / 1H11).